The sequence spans 435 residues: Type A flavoprotein fprA (435 aa).

The zinc metallo-hydrolase stretch occupies residues 48-228 (ANGTTYNAYA…PFRSFVAQAL (181 aa)). Positions 98, 100, 102, 167, 186, and 243 each coordinate Fe cation. The Flavodoxin-like domain maps to 276 to 415 (LLIFYVSAYG…EGRAFGRRLA (140 aa)).

In the N-terminal section; belongs to the zinc metallo-hydrolase group 3 family. Homodimer. FMN is required as a cofactor. Fe cation serves as cofactor.

In terms of biological role, low-potential electron donor to a number of redox enzymes. The protein is Type A flavoprotein fprA (fprA) of Rhodobacter capsulatus (strain ATCC BAA-309 / NBRC 16581 / SB1003).